Consider the following 473-residue polypeptide: Probable glycine dehydrogenase (decarboxylating) subunit 2 (473 aa).

Positions 1 to 40 (MEHYEQARYAPAEGETNEPLLSENDQTTVSVDPSLPDDLT) are disordered. Residue lysine 270 is modified to N6-(pyridoxal phosphate)lysine.

The protein belongs to the GcvP family. C-terminal subunit subfamily. In terms of assembly, the glycine cleavage system is composed of four proteins: P, T, L and H. In this organism, the P 'protein' is a heterodimer of two subunits. It depends on pyridoxal 5'-phosphate as a cofactor.

It catalyses the reaction N(6)-[(R)-lipoyl]-L-lysyl-[glycine-cleavage complex H protein] + glycine + H(+) = N(6)-[(R)-S(8)-aminomethyldihydrolipoyl]-L-lysyl-[glycine-cleavage complex H protein] + CO2. Functionally, the glycine cleavage system catalyzes the degradation of glycine. The P protein binds the alpha-amino group of glycine through its pyridoxal phosphate cofactor; CO(2) is released and the remaining methylamine moiety is then transferred to the lipoamide cofactor of the H protein. This Halobacterium salinarum (strain ATCC 700922 / JCM 11081 / NRC-1) (Halobacterium halobium) protein is Probable glycine dehydrogenase (decarboxylating) subunit 2.